The sequence spans 173 residues: MSIILGIDPGSRITGYGVIRIVAGKAEYLGSGCIRTDFGELPSRLKQVYDGVSEIITQFKPDEFAIERVFMARNADSALKLGQARGSAIVAAVNALLPVSEYSATQIKQAVVGTGGAAKEQVQHMVTHLLKLSATPQADAADALGVAICHFHTRQSLIKMAGRATSSVRGRYR.

Residues aspartate 8, glutamate 67, and aspartate 139 contribute to the active site. 3 residues coordinate Mg(2+): aspartate 8, glutamate 67, and aspartate 139.

The protein belongs to the RuvC family. In terms of assembly, homodimer which binds Holliday junction (HJ) DNA. The HJ becomes 2-fold symmetrical on binding to RuvC with unstacked arms; it has a different conformation from HJ DNA in complex with RuvA. In the full resolvosome a probable DNA-RuvA(4)-RuvB(12)-RuvC(2) complex forms which resolves the HJ. It depends on Mg(2+) as a cofactor.

It is found in the cytoplasm. The enzyme catalyses Endonucleolytic cleavage at a junction such as a reciprocal single-stranded crossover between two homologous DNA duplexes (Holliday junction).. Its function is as follows. The RuvA-RuvB-RuvC complex processes Holliday junction (HJ) DNA during genetic recombination and DNA repair. Endonuclease that resolves HJ intermediates. Cleaves cruciform DNA by making single-stranded nicks across the HJ at symmetrical positions within the homologous arms, yielding a 5'-phosphate and a 3'-hydroxyl group; requires a central core of homology in the junction. The consensus cleavage sequence is 5'-(A/T)TT(C/G)-3'. Cleavage occurs on the 3'-side of the TT dinucleotide at the point of strand exchange. HJ branch migration catalyzed by RuvA-RuvB allows RuvC to scan DNA until it finds its consensus sequence, where it cleaves and resolves the cruciform DNA. This is Crossover junction endodeoxyribonuclease RuvC from Aeromonas salmonicida (strain A449).